We begin with the raw amino-acid sequence, 550 residues long: Membrane protein insertase YidC (550 aa).

A helical membrane pass occupies residues 6–26 (NLLVIALLFVSFMIWQTWEQD). 2 disordered regions span residues 28–54 (APKPQVQQTTQTTTTAAGSAASQGVPA) and 111–132 (QSGLTGRNGPDNPNNNKGRPLY). The segment covering 30–52 (KPQVQQTTQTTTTAAGSAASQGV) has biased composition (low complexity). The span at 111–127 (QSGLTGRNGPDNPNNNK) shows a compositional bias: polar residues. The next 4 membrane-spanning stretches (helical) occupy residues 346–366 (KWIHSFLGNWGFSIIAITFIV), 421–441 (LGGCFPLLIQMPIFLALYYML), 459–479 (LSAQDPYYILPILMGATMFFI), and 500–520 (PVIFTVFFLWFPSGLVLYYIV).

This sequence belongs to the OXA1/ALB3/YidC family. Type 1 subfamily. As to quaternary structure, interacts with the Sec translocase complex via SecD. Specifically interacts with transmembrane segments of nascent integral membrane proteins during membrane integration.

It is found in the cell inner membrane. Functionally, required for the insertion and/or proper folding and/or complex formation of integral membrane proteins into the membrane. Involved in integration of membrane proteins that insert both dependently and independently of the Sec translocase complex, as well as at least some lipoproteins. Aids folding of multispanning membrane proteins. The sequence is that of Membrane protein insertase YidC from Cronobacter sakazakii (strain ATCC BAA-894) (Enterobacter sakazakii).